The sequence spans 149 residues: Inner membrane protein YdcZ (149 aa).

Residues 1–4 (MNQS) lie on the Periplasmic side of the membrane. The helical transmembrane segment at 5–25 (LTLAFLIAAGIGLVVQNTLMV) threads the bilayer. The Cytoplasmic segment spans residues 26–33 (RITQTSST). The helical transmembrane segment at 34–54 (ILIAMLLNSLVGIVLFVSILW) threads the bilayer. The Periplasmic portion of the chain corresponds to 55–70 (FKQGMAGFGELVSSVR). Residues 71–91 (WWTLIPGLLGSFFVFASISGY) form a helical membrane-spanning segment. Over 92–93 (QN) the chain is Cytoplasmic. Residues 94-114 (VGAATTIAVLVASQLIGGLML) form a helical membrane-spanning segment. Over 115–123 (DIFRSHGVP) the chain is Periplasmic. The chain crosses the membrane as a helical span at residues 124–144 (LRALFGPICGAILLVVGAWLV). The Cytoplasmic portion of the chain corresponds to 145 to 149 (ARRSF).

It is found in the cell inner membrane. This Escherichia coli (strain K12) protein is Inner membrane protein YdcZ (ydcZ).